Reading from the N-terminus, the 244-residue chain is MSPVASTRWCPTPEQLMILEEMYRSGIRTPNAVQIQQITAHLAFYGRIEGKNVFYWFQNHKARDRQKLRKKLAKQLHQQQHQLQLQLQQIKPKPISSMISQPVNKNIIDHHNPYHHHHHNHHHNHHRPYDHMSFDCCSHPSPMCLPHQGTGVGEAPSKVMNEYYCTKSGAEEILMQKSITGPNSSYGRDWMMMMDMGPRPSYPSSSSSPISCCNMMMSSPKIPLKTLELFPISSINSKQDSTKL.

The segment at residues 4-68 (VASTRWCPTP…NHKARDRQKL (65 aa)) is a DNA-binding region (homeobox; WUS-type).

Belongs to the WUS homeobox family. In terms of tissue distribution, expressed in aerial parts of seedlings, inflorescences and flowers at low level. Expressed in a restricted number of L1 cells at the lateral regions of flower primordia.

It is found in the nucleus. In terms of biological role, probable transcription factor required to initiate organ founder cells in a lateral domain of shoot meristems. Involved in the lateral sepal axis-dependent development of flowers, probably by regulating the proliferation of L1 cells at the lateral region of flower primordia. Required for the formation of the margin cells of the first and second whorl organs. The sequence is that of WUSCHEL-related homeobox 3 (WOX3) from Arabidopsis thaliana (Mouse-ear cress).